The sequence spans 357 residues: Pre-mRNA-splicing factor RBM22 homolog (357 aa).

The C3H1-type zinc-finger motif lies at 153–180; it reads RNMARVCSFWRKNSCNRGDECPYLHKEI. In terms of domain architecture, RRM spans 222–295; sequence NKICIQGISE…CNLTVHLQDN (74 aa).

This sequence belongs to the SLT11 family. Probable component of the spliceosome C complex.

It is found in the nucleus. Involved in pre-mRNA splicing. Binds RNA. This chain is Pre-mRNA-splicing factor RBM22 homolog, found in Plasmodium falciparum (isolate 3D7).